The following is a 607-amino-acid chain: MNDVSQKAEIKEMLASDDEEESSPKIEKAYVPKLTGTVKGKFDEMEKHRQEEQRKRTEEERKRRIEQDLLEKRKIQRELAKRAEQIEDINNTGTESASEEGDDSLLITVVPAKSYKTPGKTKDPEDLDREEGNGRTNHEEDKMRYEEECRVLKEAKCLSLVMDDETEAKKESHFPGKLKSTFEELERQRQENRKKQAEEEARRRLEEERRSFEEARRHMVNEEDENQDRETVFKEYRPGKLKLSFEEIERQRREDEKRKAEEEARRRIEEEKAAFAEARRSMVLDDDSPEIYKTVSQESLTPGKLEINFEQLLRQKMEEERRRTEEERRHKLEMEKQEFEQLRQEMGKEEEENESFGLSREYEELIKLKRSGSIQAKNLKSKFEKIGQLSEKEVQKKIEEERAKRRAIDLEIKEREAENFHEDDDVDVRPAKKSESPFTHKVNMKARFEQMAKAREEEEQRRIEEQKLLRMQFEQKEIDAALQKKREDEEEEEGSIVNGSTTEDEEQTRSGAPWFKKPLRNTSVVDSEPVRFTVKVTGEPKPEITWWFEGEILQDGEDYQYIERGETYCLYLPETFPEDGGEYMCKAVNNKGSAASTCILTIEMDDY.

The span at 1-14 shows a compositional bias: basic and acidic residues; the sequence is MNDVSQKAEIKEML. 2 disordered regions span residues 1 to 143 and 165 to 268; these read MNDV…EDKM and ETEA…RRRI. A Phosphoserine modification is found at Ser-16. Basic and acidic residues-rich tracts occupy residues 40–85, 120–143, 167–221, and 228–268; these read GKFD…RAEQ, KTKD…EDKM, EAKK…HMVN, and DRET…RRRI. The residue at position 172 (Ser-172) is a Phosphoserine. Residues Ser-281, Ser-288, and Ser-296 each carry the phosphoserine modification. The residue at position 301 (Thr-301) is a Phosphothreonine. Disordered regions lie at residues 419-444 and 480-514; these read NFHE…KVNM and AALQ…GAPW. Phosphoserine occurs at positions 495 and 500. Phosphothreonine is present on Thr-502. The Ig-like domain occupies 513-601; sequence PWFKKPLRNT…GSAASTCILT (89 aa).

Interacts with F-actin.

Its subcellular location is the cytoplasm. The protein localises to the cytoskeleton. It localises to the cell junction. It is found in the adherens junction. The protein resides in the myofibril. Its subcellular location is the sarcomere. The protein localises to the z line. Involved in regulating cell migration through association with the actin cytoskeleton. Has an essential role in the maintenance of Z line and sarcomere integrity. This Mus musculus (Mouse) protein is Nexilin.